Reading from the N-terminus, the 214-residue chain is Probable transaldolase (214 aa).

Lys-83 functions as the Schiff-base intermediate with substrate in the catalytic mechanism.

Belongs to the transaldolase family. Type 3B subfamily.

It is found in the cytoplasm. It catalyses the reaction D-sedoheptulose 7-phosphate + D-glyceraldehyde 3-phosphate = D-erythrose 4-phosphate + beta-D-fructose 6-phosphate. It participates in carbohydrate degradation; pentose phosphate pathway; D-glyceraldehyde 3-phosphate and beta-D-fructose 6-phosphate from D-ribose 5-phosphate and D-xylulose 5-phosphate (non-oxidative stage): step 2/3. In terms of biological role, transaldolase is important for the balance of metabolites in the pentose-phosphate pathway. The protein is Probable transaldolase of Streptococcus equi subsp. zooepidemicus (strain MGCS10565).